The chain runs to 397 residues: Elongation factor Tu (397 aa).

In terms of domain architecture, tr-type G spans 10–206; it reads KPHVNIGTIG…AVDQNIPEPQ (197 aa). Positions 19 to 26 are G1; sequence GHIDHGKT. 19–26 provides a ligand contact to GTP; sequence GHIDHGKT. Position 26 (threonine 26) interacts with Mg(2+). The interval 62–66 is G2; sequence GITIS. The tract at residues 83-86 is G3; it reads DCPG. GTP is bound by residues 83-87 and 138-141; these read DCPGH and NKSD. The interval 138–141 is G4; the sequence is NKSD. Residues 176 to 178 form a G5 region; it reads SAL.

It belongs to the TRAFAC class translation factor GTPase superfamily. Classic translation factor GTPase family. EF-Tu/EF-1A subfamily. In terms of assembly, monomer.

Its subcellular location is the cytoplasm. It carries out the reaction GTP + H2O = GDP + phosphate + H(+). GTP hydrolase that promotes the GTP-dependent binding of aminoacyl-tRNA to the A-site of ribosomes during protein biosynthesis. This chain is Elongation factor Tu, found in Thermobifida fusca (strain YX).